A 65-amino-acid chain; its full sequence is Beta-defensin 106A (65 aa).

The signal sequence occupies residues M1–A20. Cystine bridges form between C26-C53, C33-C47, and C37-C54.

The protein belongs to the beta-defensin family. Monomer. Interacts with CCR2 (via extracellular N-terminal region); this interaction may preferentially require specific tyrosine sulfation on CCR2.

It is found in the secreted. It localises to the membrane. Its function is as follows. Has antibacterial activity. Acts as a ligand for C-C chemokine receptor CCR2. The protein is Beta-defensin 106A (DEFB106A) of Gorilla gorilla gorilla (Western lowland gorilla).